A 187-amino-acid chain; its full sequence is Large ribosomal subunit protein uL5 (187 aa).

The protein belongs to the universal ribosomal protein uL5 family. In terms of assembly, part of the 50S ribosomal subunit; part of the 5S rRNA/L5/L18/L25 subcomplex. Contacts the 5S rRNA and the P site tRNA. Forms a bridge to the 30S subunit in the 70S ribosome.

Functionally, this is one of the proteins that bind and probably mediate the attachment of the 5S RNA into the large ribosomal subunit, where it forms part of the central protuberance. In the 70S ribosome it contacts protein S13 of the 30S subunit (bridge B1b), connecting the 2 subunits; this bridge is implicated in subunit movement. Contacts the P site tRNA; the 5S rRNA and some of its associated proteins might help stabilize positioning of ribosome-bound tRNAs. In Ruegeria sp. (strain TM1040) (Silicibacter sp.), this protein is Large ribosomal subunit protein uL5.